The following is a 758-amino-acid chain: Amyloid beta precursor protein binding family B member 2 (758 aa).

S123 is modified (phosphoserine). The disordered stretch occupies residues 134–154; it reads KLEGKEPHPQDSSSCEILPSQ. S160 bears the Phosphoserine mark. Basic and acidic residues predominate over residues 176-190; that stretch reads EQNRGNHHGTAEEKS. Disordered stretches follow at residues 176–195, 206–295, and 326–351; these read EQNR…PVQG, LLLQ…LPPG, and DLQG…KQPW. 2 stretches are compositionally biased toward polar residues: residues 212–230 and 261–275; these read NRPQ…SSSP and SWTT…PSSP. Residues 290–322 form the WW domain; sequence PDLPPGWKRVSDIAGTYYWHIPTGTTQWERPVS. Over residues 331-340 the composition is skewed to polar residues; that stretch reads RKGSLSSVTP. A phosphoserine mark is found at S334, S409, and S412. PID domains are found at residues 413 to 578 and 584 to 736; these read DPEA…LQVD and TELV…VTTN.

In terms of assembly, interacts (via C-terminus) with APP (via C-terminus). Interacts with APLP2 (via cytoplasmic domain). In terms of tissue distribution, widely expressed.

It localises to the endoplasmic reticulum. Its subcellular location is the golgi apparatus. The protein localises to the early endosome. Its function is as follows. Plays a role in the maintenance of lens transparency, and may also play a role in muscle cell strength. Involved in hippocampal neurite branching and neuromuscular junction formation, as a result plays a role in spatial memory functioning. Activates transcription of APP. The chain is Amyloid beta precursor protein binding family B member 2 from Homo sapiens (Human).